A 215-amino-acid chain; its full sequence is Thiamine-phosphate synthase (215 aa).

4-amino-2-methyl-5-(diphosphooxymethyl)pyrimidine-binding positions include 43-47 (QLRDK) and asparagine 75. Mg(2+) contacts are provided by aspartate 76 and aspartate 95. Serine 114 provides a ligand contact to 4-amino-2-methyl-5-(diphosphooxymethyl)pyrimidine. Residue 141 to 143 (TPT) coordinates 2-[(2R,5Z)-2-carboxy-4-methylthiazol-5(2H)-ylidene]ethyl phosphate. Lysine 144 lines the 4-amino-2-methyl-5-(diphosphooxymethyl)pyrimidine pocket. Glycine 172 is a 2-[(2R,5Z)-2-carboxy-4-methylthiazol-5(2H)-ylidene]ethyl phosphate binding site.

This sequence belongs to the thiamine-phosphate synthase family. Requires Mg(2+) as cofactor.

It carries out the reaction 2-[(2R,5Z)-2-carboxy-4-methylthiazol-5(2H)-ylidene]ethyl phosphate + 4-amino-2-methyl-5-(diphosphooxymethyl)pyrimidine + 2 H(+) = thiamine phosphate + CO2 + diphosphate. The catalysed reaction is 2-(2-carboxy-4-methylthiazol-5-yl)ethyl phosphate + 4-amino-2-methyl-5-(diphosphooxymethyl)pyrimidine + 2 H(+) = thiamine phosphate + CO2 + diphosphate. The enzyme catalyses 4-methyl-5-(2-phosphooxyethyl)-thiazole + 4-amino-2-methyl-5-(diphosphooxymethyl)pyrimidine + H(+) = thiamine phosphate + diphosphate. It participates in cofactor biosynthesis; thiamine diphosphate biosynthesis; thiamine phosphate from 4-amino-2-methyl-5-diphosphomethylpyrimidine and 4-methyl-5-(2-phosphoethyl)-thiazole: step 1/1. Its function is as follows. Condenses 4-methyl-5-(beta-hydroxyethyl)thiazole monophosphate (THZ-P) and 2-methyl-4-amino-5-hydroxymethyl pyrimidine pyrophosphate (HMP-PP) to form thiamine monophosphate (TMP). The chain is Thiamine-phosphate synthase from Streptomyces avermitilis (strain ATCC 31267 / DSM 46492 / JCM 5070 / NBRC 14893 / NCIMB 12804 / NRRL 8165 / MA-4680).